The primary structure comprises 105 residues: MGTNQILDEIREVNLSYLLLAQQMLREDRVAAMYRLGIDEDIADILIKLTNSQLLKMAGSNMLLCRFRFDDSLIAEILTSHKQDRALTQSHAAILMAGQPAEKIS.

The protein belongs to the FlhD family. Homodimer; disulfide-linked. Forms a heterohexamer composed of two FlhC and four FlhD subunits. Each FlhC binds a FlhD dimer, forming a heterotrimer, and a hexamer assembles by dimerization of two heterotrimers.

Its subcellular location is the cytoplasm. Its function is as follows. Functions in complex with FlhC as a master transcriptional regulator that regulates transcription of several flagellar and non-flagellar operons by binding to their promoter region. Activates expression of class 2 flagellar genes, including fliA, which is a flagellum-specific sigma factor that turns on the class 3 genes. Also regulates genes whose products function in a variety of physiological pathways. In Nitrosomonas eutropha (strain DSM 101675 / C91 / Nm57), this protein is Flagellar transcriptional regulator FlhD.